The following is a 262-amino-acid chain: Hydroxyethylthiazole kinase (262 aa).

Position 50 (Met-50) interacts with substrate. Residues Arg-125 and Thr-171 each contribute to the ATP site. Gly-198 is a binding site for substrate.

Belongs to the Thz kinase family. The cofactor is Mg(2+).

It catalyses the reaction 5-(2-hydroxyethyl)-4-methylthiazole + ATP = 4-methyl-5-(2-phosphooxyethyl)-thiazole + ADP + H(+). The protein operates within cofactor biosynthesis; thiamine diphosphate biosynthesis; 4-methyl-5-(2-phosphoethyl)-thiazole from 5-(2-hydroxyethyl)-4-methylthiazole: step 1/1. Its function is as follows. Catalyzes the phosphorylation of the hydroxyl group of 4-methyl-5-beta-hydroxyethylthiazole (THZ). The chain is Hydroxyethylthiazole kinase from Escherichia coli (strain K12 / MC4100 / BW2952).